Consider the following 178-residue polypeptide: Large ribosomal subunit protein uL6 (178 aa).

It belongs to the universal ribosomal protein uL6 family. Part of the 50S ribosomal subunit.

Functionally, this protein binds to the 23S rRNA, and is important in its secondary structure. It is located near the subunit interface in the base of the L7/L12 stalk, and near the tRNA binding site of the peptidyltransferase center. The chain is Large ribosomal subunit protein uL6 from Arthrobacter sp. (strain FB24).